The sequence spans 508 residues: Strychnine-11-hydroxylase (508 aa).

Residues 5–25 (MSFLLLFSLCFLIHCFVFLLI) form a helical membrane-spanning segment. Cys445 provides a ligand contact to heme.

This sequence belongs to the cytochrome P450 family. Heme serves as cofactor.

The protein localises to the membrane. It catalyses the reaction beta-colubrine + reduced [NADPH--hemoprotein reductase] + O2 = 11-demethylbrucine + oxidized [NADPH--hemoprotein reductase] + H2O + H(+). It participates in alkaloid biosynthesis. In terms of biological role, monooxygenase involved in the biosynthesis of curare monoterpene indole alkaloids (MIAs), natural products such as strychnine, a neurotoxic compound used as a pesticide to control rodents, and its pharmacologically active derivatives, including brucine, used to regulate blood pressure. Curare alkaloids act as animal glycine receptor antagonists. Catalyzes the conversion of beta-colubrine to 11-deMe brucine. The protein is Strychnine-11-hydroxylase of Strychnos nux-vomica (Poison nut).